We begin with the raw amino-acid sequence, 204 residues long: Putative F-box protein L168 (204 aa).

Residues 1 to 46 (MNLCDLFDEIIIGIIDELSDRDKIKFMTTCSRFYYFIDKTKYFDIY) form the F-box domain. The segment at 161 to 184 (NETNKITNNHTNKKINNNKKHQNN) is disordered. The segment covering 171–183 (TNKKINNNKKHQN) has biased composition (basic residues).

The polypeptide is Putative F-box protein L168 (Acanthamoeba polyphaga (Amoeba)).